The following is a 226-amino-acid chain: PKHD-type hydroxylase Pput_0892 (226 aa).

Residues 78–178 (KVFPPLINCY…RYAAFFWTQS (101 aa)) enclose the Fe2OG dioxygenase domain. Residues histidine 96, aspartate 98, and histidine 159 each coordinate Fe cation. Position 169 (arginine 169) interacts with 2-oxoglutarate.

Fe(2+) serves as cofactor. It depends on L-ascorbate as a cofactor.

This is PKHD-type hydroxylase Pput_0892 from Pseudomonas putida (strain ATCC 700007 / DSM 6899 / JCM 31910 / BCRC 17059 / LMG 24140 / F1).